Reading from the N-terminus, the 189-residue chain is ATP synthase subunit b (189 aa).

Residues 25–45 (LPVWPEVVIGLICFGIVFFVF) form a helical membrane-spanning segment.

This sequence belongs to the ATPase B chain family. F-type ATPases have 2 components, F(1) - the catalytic core - and F(0) - the membrane proton channel. F(1) has five subunits: alpha(3), beta(3), gamma(1), delta(1), epsilon(1). F(0) has three main subunits: a(1), b(2) and c(10-14). The alpha and beta chains form an alternating ring which encloses part of the gamma chain. F(1) is attached to F(0) by a central stalk formed by the gamma and epsilon chains, while a peripheral stalk is formed by the delta and b chains.

It is found in the cell membrane. In terms of biological role, f(1)F(0) ATP synthase produces ATP from ADP in the presence of a proton or sodium gradient. F-type ATPases consist of two structural domains, F(1) containing the extramembraneous catalytic core and F(0) containing the membrane proton channel, linked together by a central stalk and a peripheral stalk. During catalysis, ATP synthesis in the catalytic domain of F(1) is coupled via a rotary mechanism of the central stalk subunits to proton translocation. Functionally, component of the F(0) channel, it forms part of the peripheral stalk, linking F(1) to F(0). The sequence is that of ATP synthase subunit b from Streptomyces griseus subsp. griseus (strain JCM 4626 / CBS 651.72 / NBRC 13350 / KCC S-0626 / ISP 5235).